The primary structure comprises 251 residues: Triosephosphate isomerase (251 aa).

A substrate-binding site is contributed by 9–11 (NWK). The active-site Electrophile is the His95. The active-site Proton acceptor is the Glu167. Substrate contacts are provided by residues Gly173, Ser212, and 233-234 (GG).

The protein belongs to the triosephosphate isomerase family. In terms of assembly, homodimer.

The protein localises to the cytoplasm. It catalyses the reaction D-glyceraldehyde 3-phosphate = dihydroxyacetone phosphate. Its pathway is carbohydrate biosynthesis; gluconeogenesis. It functions in the pathway carbohydrate degradation; glycolysis; D-glyceraldehyde 3-phosphate from glycerone phosphate: step 1/1. Its function is as follows. Involved in the gluconeogenesis. Catalyzes stereospecifically the conversion of dihydroxyacetone phosphate (DHAP) to D-glyceraldehyde-3-phosphate (G3P). In Vibrio sp. (strain ANT-300), this protein is Triosephosphate isomerase.